Reading from the N-terminus, the 788-residue chain is MAPPAAAAAVTLGGKGAALTPAAVYALSHGLADPAIDCCASPLVRVADAVAALSCEAARGDVAAFDVPTSGDGLSAKDEADVAADVKMLLFGSKLVGAAGGADAASFTKVPTVNGIFREAVRALHARVRIELNAPVKLGKRDAVQTGEGKEEALVALATQLARPVQAMLKLSVARARLCVARIDDAELRKKLTDGVEIDDLKGMLGKVTIDSDAVSVLRGVYNSLLKFRDILAWEAAVAMAVIEMDSSIEKPQACEENEAGSSTENPHASGEKPKGDKKSKKKKTLGKGTSAVLMLLRDLVTNGKEVLSVNSALLAEWGTELSLLFDPKCPRLVSLVDKVKEIVETNEVRRLPKIPKGTRDFGKEQMAIREHAFSIITGVFKMHGAVSLDTPVFELRETLMGKYGEDSKLIYDLADQGGELCSLRYDLTVPFARYVAMNNISSLKRYQIAKVYRRDNPSKGRYREFYQCDFDIAGVYETMEPDFEVIKVLTELLDQLDIGTYEIKLNHRKLLDGMLEICGVPPEKFRTVCSSIDKLDKQTFEQVKKELVDEKGISNETADKIGDLVKTRGPPLEVLLELRKEGSKFMGNAGSVTALNELEILFKALDKANAIGKIVFDLSLARGLDYYTGVIYEAVFKGTTQVGSIAAGGRYDNLVGMFSGKQVPAVGVSLGIERVFAIMEQQEMEKNQIRATETEVLVSIIGKDLILAAELVSELWNAGIKAEFKLTTRIQNHLKYATQSGIPWMVLVGESEISSGKVKLKNLAASQEEEVDRTEFAQVLKQKLRNP.

A disordered region spans residues 252 to 286; the sequence is PQACEENEAGSSTENPHASGEKPKGDKKSKKKKTL.

It belongs to the class-II aminoacyl-tRNA synthetase family. As to quaternary structure, homodimer.

It catalyses the reaction tRNA(His) + L-histidine + ATP = L-histidyl-tRNA(His) + AMP + diphosphate + H(+). The sequence is that of Histidine--tRNA ligase, cytoplasmic from Oryza sativa subsp. japonica (Rice).